Consider the following 946-residue polypeptide: Protein translocase subunit SecA (946 aa).

ATP is bound by residues Q90, 108-112 (GEGKT), and D509.

It belongs to the SecA family. Monomer and homodimer. Part of the essential Sec protein translocation apparatus which comprises SecA, SecYEG and auxiliary proteins SecDF. Other proteins may also be involved.

The protein localises to the cell inner membrane. The protein resides in the cellular thylakoid membrane. It is found in the cytoplasm. The catalysed reaction is ATP + H2O + cellular proteinSide 1 = ADP + phosphate + cellular proteinSide 2.. Functionally, part of the Sec protein translocase complex. Interacts with the SecYEG preprotein conducting channel. Has a central role in coupling the hydrolysis of ATP to the transfer of proteins into and across the cell membrane, serving as an ATP-driven molecular motor driving the stepwise translocation of polypeptide chains across the membrane. Its function is as follows. Probably participates in protein translocation into and across both the cytoplasmic and thylakoid membranes in cyanobacterial cells. The polypeptide is Protein translocase subunit SecA (Synechococcus sp. (strain RCC307)).